The chain runs to 236 residues: MQHANTTALYLIGSDESGKGDSFGGIAVSAVLIHKDKINTLHQIGVGDSKQFNDYQIKALVPKIKAAVHDQVTLSVDAKTYNQLVQSFKNVNVMLTFLHCKVYHQLLQQNKLTAQQCDISIDEFANVKLFTQYTQKLTSLQNELKELVIPNHFLIRGESYSKVIAAASILARAAFIAQMEQLSHQYGVQFPKGSAHGIVEALHLLKTKRQFHKFAQYSAVCKTTFKNVASFLKQLA.

The 228-residue stretch at 9–236 (LYLIGSDESG…NVASFLKQLA (228 aa)) folds into the RNase H type-2 domain. Positions 15, 16, and 122 each coordinate a divalent metal cation.

The protein belongs to the RNase HII family. RnhC subfamily. A divalent metal cation serves as cofactor.

The protein localises to the cytoplasm. The catalysed reaction is Endonucleolytic cleavage to 5'-phosphomonoester.. Endonuclease that specifically degrades the RNA of RNA-DNA hybrids. The protein is Ribonuclease HIII (rnhC) of Mycoplasma pneumoniae (strain ATCC 29342 / M129 / Subtype 1) (Mycoplasmoides pneumoniae).